The chain runs to 304 residues: Ribonuclease Z (304 aa).

7 residues coordinate Zn(2+): histidine 61, histidine 63, aspartate 65, histidine 66, histidine 138, aspartate 206, and histidine 265. Aspartate 65 (proton acceptor) is an active-site residue.

This sequence belongs to the RNase Z family. Homodimer. Requires Zn(2+) as cofactor.

It carries out the reaction Endonucleolytic cleavage of RNA, removing extra 3' nucleotides from tRNA precursor, generating 3' termini of tRNAs. A 3'-hydroxy group is left at the tRNA terminus and a 5'-phosphoryl group is left at the trailer molecule.. Functionally, zinc phosphodiesterase, which displays some tRNA 3'-processing endonuclease activity. Probably involved in tRNA maturation, by removing a 3'-trailer from precursor tRNA. This is Ribonuclease Z from Lachnoclostridium phytofermentans (strain ATCC 700394 / DSM 18823 / ISDg) (Clostridium phytofermentans).